Here is a 454-residue protein sequence, read N- to C-terminus: Phosphoglucosamine mutase (454 aa).

S101 acts as the Phosphoserine intermediate in catalysis. Mg(2+) is bound by residues S101, D243, D245, and D247. At S101 the chain carries Phosphoserine.

It belongs to the phosphohexose mutase family. Mg(2+) serves as cofactor. Post-translationally, activated by phosphorylation.

It carries out the reaction alpha-D-glucosamine 1-phosphate = D-glucosamine 6-phosphate. In terms of biological role, catalyzes the conversion of glucosamine-6-phosphate to glucosamine-1-phosphate. The protein is Phosphoglucosamine mutase of Geotalea daltonii (strain DSM 22248 / JCM 15807 / FRC-32) (Geobacter daltonii).